We begin with the raw amino-acid sequence, 193 residues long: Ion-translocating oxidoreductase complex subunit A (193 aa).

6 helical membrane-spanning segments follow: residues 5–25 (LLLF…FLGL), 47–67 (FVMT…LIPL), 72–92 (LRTL…EMVV), 102–122 (LLGI…VALL), 134–154 (ALYG…FAAI), and 171–191 (AIAL…SGLV).

Belongs to the NqrDE/RnfAE family. The complex is composed of six subunits: RnfA, RnfB, RnfC, RnfD, RnfE and RnfG.

The protein localises to the cell inner membrane. Its function is as follows. Part of a membrane-bound complex that couples electron transfer with translocation of ions across the membrane. This is Ion-translocating oxidoreductase complex subunit A from Citrobacter koseri (strain ATCC BAA-895 / CDC 4225-83 / SGSC4696).